A 300-amino-acid chain; its full sequence is 4-hydroxy-tetrahydrodipicolinate synthase (300 aa).

Thr-45 lines the pyruvate pocket. Tyr-140 functions as the Proton donor/acceptor in the catalytic mechanism. Residue Lys-169 is the Schiff-base intermediate with substrate of the active site. Ile-210 serves as a coordination point for pyruvate.

The protein belongs to the DapA family. In terms of assembly, homotetramer; dimer of dimers.

The protein resides in the cytoplasm. It carries out the reaction L-aspartate 4-semialdehyde + pyruvate = (2S,4S)-4-hydroxy-2,3,4,5-tetrahydrodipicolinate + H2O + H(+). It participates in amino-acid biosynthesis; L-lysine biosynthesis via DAP pathway; (S)-tetrahydrodipicolinate from L-aspartate: step 3/4. Catalyzes the condensation of (S)-aspartate-beta-semialdehyde [(S)-ASA] and pyruvate to 4-hydroxy-tetrahydrodipicolinate (HTPA). The sequence is that of 4-hydroxy-tetrahydrodipicolinate synthase from Helicobacter pylori (strain P12).